Here is a 139-residue protein sequence, read N- to C-terminus: GSK3B-interacting protein (139 aa).

The required for PRKAR2A interaction; contributes to a protective effect against H(2)O(2)-induced apoptosis stretch occupies residues Val-41–Leu-45. Positions Ser-115 to Ser-139 are interaction with GSK3B and acts as a GSK3B inhibitor.

The protein belongs to the GSKIP family. In terms of assembly, forms a complex composed of PRKAR2A or PRKAR2B, GSK3B and GSKIP through GSKIP interaction; facilitates PKA-induced phosphorylation of GSK3B leading to GSK3B inactivation; recruits DNM1L through GSK3B for PKA-mediated phosphorylation of DNM1L; promotes beta-catenin degradation through GSK3B-induced phosphorylation of beta-catenin; stabilizes beta-catenin and enhances Wnt-induced signaling through PKA-induced phosphorylation of beta-catenin. Interacts with GSK3B; induces GSK3B-mediated phosphorylation of GSKIP and inhibits GSK3B kinase activity. Phosphorylated by GSK3B.

It localises to the cytoplasm. It is found in the nucleus. A-kinase anchoring protein for GSK3B and PKA that regulates or facilitates their kinase activity towards their targets. The ternary complex enhances Wnt-induced signaling by facilitating the GSK3B- and PKA-induced phosphorylation of beta-catenin leading to beta-catenin degradation and stabilization respectively. Upon cAMP activation, the ternary complex contributes to neuroprotection against oxidative stress-induced apoptosis by facilitating the PKA-induced phosphorylation of DML1 and PKA-induced inactivation of GSK3B. During neurite outgrowth promotes neuron proliferation; while increases beta-catenin-induced transcriptional activity through GSK3B kinase activity inhibition, reduces N-cadherin level to promote cell cycle progression. May play a role in cleft palate formation and is required for postnatal life through modulation of the activity of GSK3B during development. This chain is GSK3B-interacting protein, found in Mus musculus (Mouse).